A 280-amino-acid polypeptide reads, in one-letter code: F420-dependent methylenetetrahydromethanopterin dehydrogenase (280 aa).

The protein belongs to the MTD family.

The enzyme catalyses 5,10-methylenetetrahydromethanopterin + oxidized coenzyme F420-(gamma-L-Glu)(n) + 2 H(+) = 5,10-methenyl-5,6,7,8-tetrahydromethanopterin + reduced coenzyme F420-(gamma-L-Glu)(n). Its pathway is one-carbon metabolism; methanogenesis from CO(2); 5,10-methylene-5,6,7,8-tetrahydromethanopterin from 5,10-methenyl-5,6,7,8-tetrahydromethanopterin (coenzyme F420 route): step 1/1. Functionally, catalyzes the reversible reduction of methenyl-H(4)MPT(+) to methylene-H(4)MPT. In Methanoculleus marisnigri (strain ATCC 35101 / DSM 1498 / JR1), this protein is F420-dependent methylenetetrahydromethanopterin dehydrogenase.